The sequence spans 308 residues: Baculoviral IAP repeat-containing protein bir-2 (308 aa).

2 BIR repeats span residues 27–98 and 170–241; these read RFAS…EFVM and RLAT…DFIK. Residues cysteine 68, cysteine 71, histidine 87, cysteine 94, cysteine 211, cysteine 214, histidine 230, and cysteine 237 each contribute to the Zn(2+) site.

This sequence belongs to the IAP family.

This is Baculoviral IAP repeat-containing protein bir-2 from Caenorhabditis elegans.